A 357-amino-acid polypeptide reads, in one-letter code: Arginine kinase Pro c 2.0101 (357 aa).

Residues 9–91 (KLEEGFKKLE…FDPIIEDYHK (83 aa)) form the Phosphagen kinase N-terminal domain. Residue 64 to 68 (GVGIY) coordinates L-arginine. The 238-residue stretch at 119–356 (FVISTRVRCG…LELIKIEKEM (238 aa)) folds into the Phosphagen kinase C-terminal domain. ATP is bound by residues 122–126 (STRVR) and His-185. Glu-225 lines the L-arginine pocket. Arg-229 contacts ATP. Cys-271 contacts L-arginine. Residues 280-284 (RASVH) and 309-314 (RGTRGE) contribute to the ATP site. Glu-314 contacts L-arginine.

It belongs to the ATP:guanido phosphotransferase family. Post-translationally, glycosylated. Muscle (at protein level).

The catalysed reaction is L-arginine + ATP = N(omega)-phospho-L-arginine + ADP + H(+). Catalyzes the reversible transfer of high energy ATP gamma-phosphate group to L-arginine. This chain is Arginine kinase Pro c 2.0101, found in Procambarus clarkii (Red swamp crayfish).